An 89-amino-acid polypeptide reads, in one-letter code: Small ribosomal subunit protein uS15 (89 aa).

This sequence belongs to the universal ribosomal protein uS15 family. As to quaternary structure, part of the 30S ribosomal subunit. Forms a bridge to the 50S subunit in the 70S ribosome, contacting the 23S rRNA.

One of the primary rRNA binding proteins, it binds directly to 16S rRNA where it helps nucleate assembly of the platform of the 30S subunit by binding and bridging several RNA helices of the 16S rRNA. Its function is as follows. Forms an intersubunit bridge (bridge B4) with the 23S rRNA of the 50S subunit in the ribosome. This is Small ribosomal subunit protein uS15 from Nitratiruptor sp. (strain SB155-2).